The chain runs to 342 residues: Trace amine-associated receptor 3 (342 aa).

Residues 1–35 (MDLIYIPEDLSSCPKFGNKSCPPTNRSFRVRLIMY) are Extracellular-facing. N18 and N25 each carry an N-linked (GlcNAc...) asparagine glycan. 2 cysteine pairs are disulfide-bonded: C21–C185 and C104–C189. A helical transmembrane segment spans residues 36–56 (LLMTGAMVITIFGNLVIIISI). Residues 57–68 (SHFKQLHSPTNF) are Cytoplasmic-facing. A helical membrane pass occupies residues 69-89 (LILSMATTDFLLGFVIMPYSM). The Extracellular segment spans residues 90–150 (VRSVESCWYF…TTMTASMIKR (61 aa)). A helical membrane pass occupies residues 151–168 (LLFFCWAAPALFSFGLVL). Residues 169-172 (SEAN) lie on the Cytoplasmic side of the membrane. Residues 173–186 (VSGMQSYEILIACF) are extracellular Loop 2 (ECL2). The helical transmembrane segment at 173-193 (VSGMQSYEILIACFNFCALTF) threads the bilayer. Over 194–198 (NKFWG) the chain is Extracellular. Residues 199 to 223 (TILFTTCFFTPGSIMVGIYGKIFIV) traverse the membrane as a helical segment. The Cytoplasmic portion of the chain corresponds to 224 to 256 (SRRHARALGNMPENTKGAGRNLSKKKDRKAAKT). The chain crosses the membrane as a helical span at residues 257–277 (LGIVMGVFLACWLPCFLAVLI). Topologically, residues 278–286 (DPYLDYSTP) are extracellular. The chain crosses the membrane as a helical span at residues 287–307 (IIVLDLLVWLGYFNSTCNPLI). Residues 308–342 (HGFFYPWFRKALEHIVSGKIFRSNSDTANLFPEAH) lie on the Cytoplasmic side of the membrane.

It belongs to the G-protein coupled receptor 1 family.

The protein localises to the cell membrane. Olfactory receptor activated by several primary trace amines, including isoamylamine. Activated by isoamylamine and cyclohexylamine, but not to the corresponding alcohols, isoamylalcohol and cyclohexanol. This receptor is probably mediated by the G(s)-class of G-proteins which activate adenylate cyclase. The chain is Trace amine-associated receptor 3 (Taar3) from Rattus norvegicus (Rat).